The primary structure comprises 113 residues: Nucleoid-associated protein THA_1374 (113 aa).

The protein belongs to the YbaB/EbfC family. As to quaternary structure, homodimer.

It localises to the cytoplasm. Its subcellular location is the nucleoid. Its function is as follows. Binds to DNA and alters its conformation. May be involved in regulation of gene expression, nucleoid organization and DNA protection. This Thermosipho africanus (strain TCF52B) protein is Nucleoid-associated protein THA_1374.